A 370-amino-acid polypeptide reads, in one-letter code: Fe(2+) transport protein 2 (370 aa).

The first 25 residues, 1–25 (MMMSSSQTPVRIAFVFLVILAATDA), serve as a signal peptide directing secretion. Residues 26–55 (HSDHRTPPPACGGAAVGGECHSVARALRLK) lie on the Extracellular side of the membrane. Residues 56 to 76 (LIAIPAILAASVAGVCLPLFA) form a helical membrane-spanning segment. Residues 77-85 (RSVPALRPD) are Cytoplasmic-facing. The helical transmembrane segment at 86-106 (GGLFAVVKAFASGVILGTGYM) threads the bilayer. Residues 107–130 (HVLPDSFNDLTSPCLPRKPWSEFP) lie on the Extracellular side of the membrane. The chain crosses the membrane as a helical span at residues 131 to 151 (FAAFVAMLAAVFTLMVDSLML). Over 152 to 215 (TFHTRGSKGR…TTKAQLLRNR (64 aa)) the chain is Cytoplasmic. A helical membrane pass occupies residues 216 to 236 (VIVQVLEMGIVVHSVVIGLGM). The Extracellular portion of the chain corresponds to 237–247 (GASQNVCTIRP). The chain crosses the membrane as a helical span at residues 248 to 268 (LVAALCFHQMFEGMGLGGCIL). Residues 269–278 (QAGYGGRTRS) lie on the Cytoplasmic side of the membrane. The helical transmembrane segment at 279 to 299 (ALVFFFSTTTPFGIALGLALT) threads the bilayer. The Extracellular segment spans residues 300–309 (RVYSDSSPTA). Residues 310-330 (LVVVGLLNAASAGLLHYMALV) traverse the membrane as a helical segment. At 331 to 349 (ELLAADFMGPKLQGNVRLQ) the chain is on the cytoplasmic side. Residues 350-370 (LAASLAILLGAGGMSVMAKWA) traverse the membrane as a helical segment.

This sequence belongs to the ZIP transporter (TC 2.A.5) family.

The protein resides in the cell membrane. Its function is as follows. Iron transporter that may play a role in the uptake of iron from the rhizosphere across the plasma membrane in the root epidermal layer. The sequence is that of Fe(2+) transport protein 2 (IRT2) from Oryza sativa subsp. japonica (Rice).